Reading from the N-terminus, the 266-residue chain is Glucosamine-6-phosphate deaminase (266 aa).

D72 functions as the Proton acceptor; for enolization step in the catalytic mechanism. D141 functions as the For ring-opening step in the catalytic mechanism. H143 (proton acceptor; for ring-opening step) is an active-site residue. Catalysis depends on E148, which acts as the For ring-opening step.

It belongs to the glucosamine/galactosamine-6-phosphate isomerase family. NagB subfamily. In terms of assembly, homohexamer.

It carries out the reaction alpha-D-glucosamine 6-phosphate + H2O = beta-D-fructose 6-phosphate + NH4(+). It participates in amino-sugar metabolism; N-acetylneuraminate degradation; D-fructose 6-phosphate from N-acetylneuraminate: step 5/5. Its activity is regulated as follows. Allosterically activated by N-acetylglucosamine 6-phosphate (GlcNAc6P). Functionally, catalyzes the reversible isomerization-deamination of glucosamine 6-phosphate (GlcN6P) to form fructose 6-phosphate (Fru6P) and ammonium ion. This Vibrio campbellii (strain ATCC BAA-1116) protein is Glucosamine-6-phosphate deaminase.